Reading from the N-terminus, the 547-residue chain is Phospholipase DDHD1 (547 aa).

Serine 184 is an active-site residue. A DDHD domain is found at leucine 258–lysine 533. Serine 370 is subject to Phosphoserine. The interval arginine 414–leucine 448 is disordered. Residues proline 423–proline 434 show a composition bias toward basic and acidic residues. A compositionally biased stretch (low complexity) spans serine 435–leucine 448.

Belongs to the PA-PLA1 family. In terms of assembly, forms homooligomers and, to a much smaller extent, heterooligomers with DDHD2. Interacts with SEC23A and SEC24C. Predominantly expressed in testis, in round and elongating spermatids, but not in spermatocytes (at protein level). Also expressed in the brain, and at lower levels in other tissues such as thymus and lung (at protein level).

It localises to the cytoplasm. The enzyme catalyses a 1,2-diacyl-sn-glycero-3-phosphate + H2O = a 2-acyl-sn-glycerol 3-phosphate + a fatty acid + H(+). It carries out the reaction a 1,2-diacyl-sn-glycero-3-phospho-(1D-myo-inositol) + H2O = a 2-acyl-sn-glycero-3-phospho-D-myo-inositol + a fatty acid + H(+). It catalyses the reaction 1-octadecanoyl-2-(5Z,8Z,11Z,14Z-eicosatetraenoyl)-sn-glycero-3-phospho-(1D-myo-inositol) + H2O = 2-(5Z,8Z,11Z,14Z-eicosatetraenoyl)-sn-glycero-3-phospho-(1D-myo-inositol) + octadecanoate + H(+). The catalysed reaction is a 1-acyl-2-(5Z,8Z,11Z,14Z-eicosatetraenoyl)-sn-glycero-3-phospho-(1D-myo-inositol) + H2O = 2-(5Z,8Z,11Z,14Z-eicosatetraenoyl)-sn-glycero-3-phospho-(1D-myo-inositol) + a fatty acid + H(+). The enzyme catalyses 1,2-dihexadecanoyl-sn-glycero-3-phospho-(1D-myo-inositol) + H2O = 2-hexadecanoyl-sn-glycero-3-phospho-(1D-myo-inositol) + hexadecanoate + H(+). It carries out the reaction a 1-acyl-2-(5Z,8Z,11Z,14Z)-eicosatetraenoyl-sn-glycero-3-phosphate + H2O = 2-(5Z,8Z,11Z,14Z-eicosatetraenoyl)-sn-glycero-3-phosphate + a fatty acid + H(+). It catalyses the reaction 1-(9Z-octadecenoyl)-2-(7Z,10Z,13Z,16Z,19Z-docosapentaenoyl)-sn-glycero-3-phospho-1D-myo-inositol + H2O = 2-(7Z,10Z,13Z,16Z,19Z-docosapentaenoyl)-sn-glycero-3-phospho-1D-myo-inositol + (9Z)-octadecenoate + H(+). The catalysed reaction is 1-(9Z-octadecenoyl)-2-(5Z,8Z,11Z,14Z-eicosatetraenoyl)-sn-glycero-3-phospho-1D-myo-inositol + H2O = 2-(5Z,8Z,11Z,14Z-eicosatetraenoyl)-sn-glycero-3-phospho-(1D-myo-inositol) + (9Z)-octadecenoate + H(+). The enzyme catalyses 1,2-di-(9Z-octadecenoyl)-sn-glycero-3-phospho-1D-myo-inositol + H2O = 2-(9Z-octadecenoyl)-sn-glycero-3-phospho-1D-myo-inositol + (9Z)-octadecenoate + H(+). It carries out the reaction 1-(9Z-octadecenoyl)-2-(8Z,11Z,14Z-eicosatrienoyl)-sn-glycero-3-phospho-1D-myo-inositol + H2O = 2-(8Z,11Z,14Z-eicosatrienoyl)-sn-glycero-3-phospho-1D-myo-inositol + (9Z)-octadecenoate + H(+). It catalyses the reaction 1,2-di-(9Z-octadecenoyl)-sn-glycero-3-phosphate + H2O = 2-(9Z-octadecenoyl)-sn-glycero-3-phosphate + (9Z)-octadecenoate + H(+). The catalysed reaction is 1-hexadecanoyl-2-(9Z-octadecenoyl)-sn-glycero-3-phosphate + H2O = 2-(9Z-octadecenoyl)-sn-glycero-3-phosphate + hexadecanoate + H(+). The enzyme catalyses 1-hexadecanoyl-2-(9Z-octadecenoyl)-sn-glycero-3-phospho-L-serine + H2O = 2-(9Z-octadecenoyl)-sn-glycero-3-phospho-L-serine + hexadecanoate + H(+). It carries out the reaction 1,2-di-(5Z,8Z,11Z,14Z)-eicosatetraenoyl-sn-glycero-3-phosphate + H2O = 2-(5Z,8Z,11Z,14Z-eicosatetraenoyl)-sn-glycero-3-phosphate + (5Z,8Z,11Z,14Z)-eicosatetraenoate + H(+). It catalyses the reaction 1-octadecanoyl-2-(5Z,8Z,11Z,14Z-eicosatetraenoyl)-sn-glycero-3-phosphate + H2O = 2-(5Z,8Z,11Z,14Z-eicosatetraenoyl)-sn-glycero-3-phosphate + octadecanoate + H(+). The catalysed reaction is a 1,2-diacyl-sn-glycero-3-phospho-L-serine + H2O = a 2-acyl-sn-glycero-3-phospho-L-serine + a fatty acid + H(+). The enzyme catalyses a 1,2-diacyl-sn-glycero-3-phosphocholine + H2O = a 2-acyl-sn-glycero-3-phosphocholine + a fatty acid + H(+). It carries out the reaction 1,2-di-(9Z-octadecenoyl)-sn-glycero-3-phosphocholine + H2O = (9Z-octadecenoyl)-sn-glycero-3-phosphocholine + (9Z)-octadecenoate + H(+). It catalyses the reaction a 1,2-diacyl-sn-glycero-3-phosphoethanolamine + H2O = a 2-acyl-sn-glycero-3-phosphoethanolamine + a fatty acid + H(+). The catalysed reaction is a 1,2-diacyl-sn-glycero-3-phospho-(1'-sn-glycerol) + H2O = 2-acyl-sn-glycero-3-phospho-(1'-sn-glycerol) + a fatty acid + H(+). The enzyme catalyses 1-hexadecanoyl-2-(9Z-octadecenoyl)-sn-glycero-3-phospho-(1'-sn-glycerol) + H2O = 2-(9Z-octadecenoyl)-sn-glycero-3-phospho-(1'-sn-glycerol) + hexadecanoate + H(+). It carries out the reaction 1-acyl-2-(5Z,8Z,11Z,14Z-eicosatetraenoyl)-sn-glycero-3-phosphocholine + H2O = 2-(5Z,8Z,11Z,14Z)-eicosatetraenoyl-sn-glycero-3-phosphocholine + a fatty acid + H(+). It catalyses the reaction 1-acyl-2-(5Z,8Z,11Z,14Z)-eicosatetraenoyl-sn-glycero-3-phosphoethanolamine + H2O = 2-(5Z,8Z,11Z,14Z)-eicosatetraenoyl-sn-glycero-3-phosphoethanolamine + a fatty acid + H(+). Its pathway is phospholipid metabolism; phosphatidylinositol metabolism. Functionally, phospholipase A1 (PLA1) that hydrolyzes ester bonds at the sn-1 position of glycerophospholipids producing a free fatty acid and a lysophospholipid. Prefers phosphatidate (1,2-diacyl-sn-glycero-3-phosphate, PA) as substrate in vitro, but can efficiently hydrolyze phosphatidylinositol (1,2-diacyl-sn-glycero-3-phospho-(1D-myo-inositol), PI), as well as a range of other glycerophospholipid substrates such as phosphatidylcholine (1,2-diacyl-sn-glycero-3-phosphocholine, PC), phosphatidylethanolamine (1,2-diacyl-sn-glycero-3-phosphoethanolamine, PE), phosphatidylserine (1,2-diacyl-sn-glycero-3-phospho-L-serine, PS) and phosphatidylglycerol (1,2-diacyl-sn-glycero-3-phospho-(1'-sn-glycerol), PG). Involved in the regulation of the endogenous content of polyunsaturated PI and PS lipids in the nervous system. Changes in these lipids extend to downstream metabolic products like PI phosphates PIP and PIP2, which play fundamental roles in cell biology. Regulates mitochondrial morphology. These dynamic changes may be due to PA hydrolysis at the mitochondrial surface. May play a regulatory role in spermatogenesis or sperm function. The sequence is that of Phospholipase DDHD1 from Mus musculus (Mouse).